A 293-amino-acid polypeptide reads, in one-letter code: Pyridoxal 5'-phosphate synthase subunit PdxS (293 aa).

Asp-23 is a binding site for D-ribose 5-phosphate. Lys-80 functions as the Schiff-base intermediate with D-ribose 5-phosphate in the catalytic mechanism. Gly-152 contacts D-ribose 5-phosphate. Arg-164 contacts D-glyceraldehyde 3-phosphate. D-ribose 5-phosphate is bound by residues Gly-213 and 234 to 235 (GS).

It belongs to the PdxS/SNZ family. In terms of assembly, in the presence of PdxT, forms a dodecamer of heterodimers.

The catalysed reaction is aldehydo-D-ribose 5-phosphate + D-glyceraldehyde 3-phosphate + L-glutamine = pyridoxal 5'-phosphate + L-glutamate + phosphate + 3 H2O + H(+). The protein operates within cofactor biosynthesis; pyridoxal 5'-phosphate biosynthesis. Functionally, catalyzes the formation of pyridoxal 5'-phosphate from ribose 5-phosphate (RBP), glyceraldehyde 3-phosphate (G3P) and ammonia. The ammonia is provided by the PdxT subunit. Can also use ribulose 5-phosphate and dihydroxyacetone phosphate as substrates, resulting from enzyme-catalyzed isomerization of RBP and G3P, respectively. This is Pyridoxal 5'-phosphate synthase subunit PdxS from Roseiflexus sp. (strain RS-1).